The following is a 275-amino-acid chain: Sulfate transporter CysZ (275 aa).

Residues 1-24 (MSSEKSSFPEKPPSFEKPSHSNTA) are disordered. A compositionally biased stretch (basic and acidic residues) spans 13 to 24 (PSFEKPSHSNTA). Transmembrane regions (helical) follow at residues 49-69 (FVIL…WWLF), 93-113 (LIWP…FSTI), 169-189 (IVLL…PVLW), and 232-252 (ALVS…PVAV).

It belongs to the CysZ family.

The protein resides in the cell inner membrane. Its function is as follows. High affinity, high specificity proton-dependent sulfate transporter, which mediates sulfate uptake. Provides the sulfur source for the cysteine synthesis pathway. In Pectobacterium atrosepticum (strain SCRI 1043 / ATCC BAA-672) (Erwinia carotovora subsp. atroseptica), this protein is Sulfate transporter CysZ.